We begin with the raw amino-acid sequence, 244 residues long: tRNA pseudouridine synthase A (244 aa).

Catalysis depends on Asp-53, which acts as the Nucleophile. Tyr-111 lines the substrate pocket.

This sequence belongs to the tRNA pseudouridine synthase TruA family. Homodimer.

It catalyses the reaction uridine(38/39/40) in tRNA = pseudouridine(38/39/40) in tRNA. Its function is as follows. Formation of pseudouridine at positions 38, 39 and 40 in the anticodon stem and loop of transfer RNAs. This chain is tRNA pseudouridine synthase A, found in Bacillus sp. (strain KSM-64).